A 73-amino-acid polypeptide reads, in one-letter code: Protein SlyX homolog (73 aa).

The tract at residues L54–Y73 is disordered. Positions A57 to N67 are enriched in low complexity.

Belongs to the SlyX family.

This chain is Protein SlyX homolog, found in Rhodopseudomonas palustris (strain BisA53).